A 991-amino-acid chain; its full sequence is Receptor-like protein kinase HAIKU2 (991 aa).

An N-terminal signal peptide occupies residues 1–19; that stretch reads MLRLLFIVRLLFLMPLASS. The Extracellular segment spans residues 20–616; it reads RSNHSEEVEN…KRKHLSKVDM (597 aa). Asn22 carries N-linked (GlcNAc...) asparagine glycosylation. 21 LRR repeats span residues 66–90, 99–123, 125–148, 150–170, 171–196, 197–220, 221–244, 246–267, 269–291, 292–314, 315–339, 341–363, 365–387, 388–411, 413–435, 436–459, 461–482, 483–508, 510–531, 532–554, and 555–578; these read DGNVVEINLGSRSLINRDDDGRFTD, LKLLEKLVLGNNSLRGQIGTNLGKC, RLRYLDLGINNFSGEFPAIDSLQL, EFLSLNASGISGIFPWSSLKD, LKRLSFLSVGDNRFGSHPFPREILNL, TALQWVYLSNSSITGKIPEGIKNL, VRLQNLELSDNQISGEIPKEIVQL, NLRQLEIYSNDLTGKLPLGFRN, TNLRNFDASNNSLEGDLSELRFL, KNLVSLGMFENRLTGEIPKEFGD, FKSLAALSLYRNQLTGKLPRRLGSW, AFKYIDVSENFLEGQIPPYMCKK, VMTHLLMLQNRFTGQFPESYAKC, KTLIRLRVSNNSLSGMIPSGIWGL, NLQFLDLASNYFEGNLTGDIGNA, KSLGSLDLSNNRFSGSLPFQISGA, SLVSVNLRMNKFSGIVPESFGK, LKELSSLILDQNNLSGAIPKSLGLCT, LVDLNFAGNSLSEEIPESLGSL, KLLNSLNLSGNKLSGMIPVGLSA, and LKLSLLDLSNNQLTGSVPESLVSG. Asn109, Asn135, Asn155, Asn195, and Asn206 each carry an N-linked (GlcNAc...) asparagine glycan. 2 N-linked (GlcNAc...) asparagine glycosylation sites follow: Asn267 and Asn278. N-linked (GlcNAc...) asparagine glycosylation is found at Asn397 and Asn427. An N-linked (GlcNAc...) asparagine glycan is attached at Asn495. An N-linked (GlcNAc...) asparagine glycan is attached at Asn538. Residues 617–637 form a helical membrane-spanning segment; that stretch reads CFIVAAILALFFLFSYVIFKI. Over 638–991 the chain is Cytoplasmic; sequence RRDKLNKTVQ…SANDEITKVV (354 aa). In terms of domain architecture, Protein kinase spans 671 to 970; the sequence is IKSENIIGRG…SMLEKIEPSY (300 aa). ATP contacts are provided by residues 677–685 and Lys699; that span reads IGRGGQGNV. 2 positions are modified to phosphotyrosine: Tyr762 and Tyr801. Asp814 functions as the Proton acceptor in the catalytic mechanism. Phosphotyrosine occurs at positions 859 and 866. At Thr867 the chain carries Phosphothreonine. A disordered region spans residues 972–991; sequence KNSGEASYGESANDEITKVV.

This sequence belongs to the protein kinase superfamily. Ser/Thr protein kinase family. As to expression, expressed in the endosperm of fertilized ovules.

It is found in the membrane. The catalysed reaction is L-seryl-[protein] + ATP = O-phospho-L-seryl-[protein] + ADP + H(+). It carries out the reaction L-threonyl-[protein] + ATP = O-phospho-L-threonyl-[protein] + ADP + H(+). In terms of biological role, modulates the seed size by negatively regulating the cellularization of syncytial endosperm. This Arabidopsis thaliana (Mouse-ear cress) protein is Receptor-like protein kinase HAIKU2 (IKU2).